The following is a 386-amino-acid chain: Putative acid--amine ligase YgiC (386 aa).

100–102 (RLD) provides a ligand contact to ATP. Mg(2+) contacts are provided by D102, E115, and N117. Residues K267, K302, G309, Q336, and 371 to 373 (LIT) each bind ATP.

This sequence belongs to the glutathionylspermidine synthase preATP-grasp family.

Its function is as follows. May be a ligase forming an amide bond. Shows ATPase activity. This is Putative acid--amine ligase YgiC (ygiC) from Escherichia coli O157:H7.